We begin with the raw amino-acid sequence, 203 residues long: Potassium channel Cha6605_3372 (203 aa).

Residues M1–Q7 lie on the Cytoplasmic side of the membrane. Residues S8–E31 form a helical membrane-spanning segment. Positions R12 to D18 match the RxxxFSD motif motif. The Extracellular segment spans residues I32–L52. A short helix H1 region spans residues H37–T42. The interval G44–L50 is short helix H2. Residues W53–S78 traverse the membrane as a helical segment. Residues L79–D84 are Cytoplasmic-facing. Residues H85–E110 traverse the membrane as a helical segment. The Extracellular segment spans residues Y111–A117. Residues R118–A142 traverse the membrane as a helical segment. The Cytoplasmic segment spans residues A143–D154. The chain crosses the membrane as a helical span at residues R155 to I181. The Extracellular portion of the chain corresponds to S182 to V183. The chain crosses the membrane as a helical span at residues W184–L199. At R200–A203 the chain is on the cytoplasmic side.

This sequence belongs to the TMEM175 family. In terms of assembly, homotetramer.

The protein resides in the membrane. It catalyses the reaction K(+)(in) = K(+)(out). Potassium channel. The channel is permeable for K(+), Rb(+) and Cs(+), while it is unable to conduct Na(+). This is Potassium channel Cha6605_3372 from Chamaesiphon minutus (strain ATCC 27169 / PCC 6605).